We begin with the raw amino-acid sequence, 379 residues long: Pectin lyase A (379 aa).

Residues 1 to 20 form the signal peptide; sequence MKYSTIFSAAAAVFAGSAAA. 2 disulfide bridges follow: cysteine 83–cysteine 102 and cysteine 92–cysteine 226. Threonine 88 carries an O-linked (Man) threonine glycan. N-linked (GlcNAc...) asparagine glycosylation is present at asparagine 129. Arginine 256 is an active-site residue. Cysteine 322 and cysteine 330 form a disulfide bridge. The O-linked (Man) serine; in strain 4M-147 glycan is linked to serine 368.

It belongs to the polysaccharide lyase 1 family. In terms of processing, N-glycosylated at Asn-129 and O-glycosylated at Thr-88 when expressed in Aspergillus nidulans. The protein from strain 4M-147 is O-glycosylated at Thr-88 and Ser-368. PubMed:9195887 modeled GalNAc at the O-glycosylation site, a glycosylation not observed in fungi. The O-linked saccharide is probably mannose.

Its subcellular location is the secreted. The enzyme catalyses Eliminative cleavage of (1-&gt;4)-alpha-D-galacturonan methyl ester to give oligosaccharides with 4-deoxy-6-O-methyl-alpha-D-galact-4-enuronosyl groups at their non-reducing ends.. Its function is as follows. Pectinolytic enzymes consist of four classes of enzymes: pectin lyase, polygalacturonase, pectin methylesterase and rhamnogalacturonase. Among pectinolytic enzymes, pectin lyase is the most important in depolymerization of pectin, since it cleaves internal glycosidic bonds of highly methylated pectins. The sequence is that of Pectin lyase A (pelA) from Aspergillus niger.